A 293-amino-acid polypeptide reads, in one-letter code: ATP synthase gamma chain (293 aa).

It belongs to the ATPase gamma chain family. As to quaternary structure, F-type ATPases have 2 components, CF(1) - the catalytic core - and CF(0) - the membrane proton channel. CF(1) has five subunits: alpha(3), beta(3), gamma(1), delta(1), epsilon(1). CF(0) has three main subunits: a, b and c.

It is found in the cell inner membrane. In terms of biological role, produces ATP from ADP in the presence of a proton gradient across the membrane. The gamma chain is believed to be important in regulating ATPase activity and the flow of protons through the CF(0) complex. The protein is ATP synthase gamma chain of Beijerinckia indica subsp. indica (strain ATCC 9039 / DSM 1715 / NCIMB 8712).